Consider the following 692-residue polypeptide: Elongation factor G (692 aa).

A tr-type G domain is found at 8-282 (KDYRNIGIMA…AVVDYLPSPL (275 aa)). Residues 17-24 (AHIDAGKT), 81-85 (DTPGH), and 135-138 (NKMD) contribute to the GTP site.

The protein belongs to the TRAFAC class translation factor GTPase superfamily. Classic translation factor GTPase family. EF-G/EF-2 subfamily.

It localises to the cytoplasm. Catalyzes the GTP-dependent ribosomal translocation step during translation elongation. During this step, the ribosome changes from the pre-translocational (PRE) to the post-translocational (POST) state as the newly formed A-site-bound peptidyl-tRNA and P-site-bound deacylated tRNA move to the P and E sites, respectively. Catalyzes the coordinated movement of the two tRNA molecules, the mRNA and conformational changes in the ribosome. This Mycoplasmopsis pulmonis (strain UAB CTIP) (Mycoplasma pulmonis) protein is Elongation factor G (fusA).